The chain runs to 145 residues: [Ribosomal protein bS18]-alanine N-acetyltransferase (145 aa).

The region spanning 1 to 145 is the N-acetyltransferase domain; the sequence is MIETIVEQDF…ENAVIMALYL (145 aa). 67-69 contacts acetyl-CoA; it reads LAV. Residue Glu101 is the Proton acceptor of the active site. Acetyl-CoA is bound at residue Asn106. Catalysis depends on Tyr113, which acts as the Proton donor.

This sequence belongs to the acetyltransferase family. RimI subfamily.

The protein resides in the cytoplasm. It catalyses the reaction N-terminal L-alanyl-[ribosomal protein bS18] + acetyl-CoA = N-terminal N(alpha)-acetyl-L-alanyl-[ribosomal protein bS18] + CoA + H(+). In terms of biological role, acetylates the N-terminal alanine of ribosomal protein bS18. This chain is [Ribosomal protein bS18]-alanine N-acetyltransferase, found in Haemophilus ducreyi (strain 35000HP / ATCC 700724).